Here is a 244-residue protein sequence, read N- to C-terminus: Phosphoribosyl isomerase A (244 aa).

Aspartate 10 serves as the catalytic Proton acceptor. Residue aspartate 129 is the Proton donor of the active site.

It belongs to the HisA/HisF family.

The protein localises to the cytoplasm. The catalysed reaction is 1-(5-phospho-beta-D-ribosyl)-5-[(5-phospho-beta-D-ribosylamino)methylideneamino]imidazole-4-carboxamide = 5-[(5-phospho-1-deoxy-D-ribulos-1-ylimino)methylamino]-1-(5-phospho-beta-D-ribosyl)imidazole-4-carboxamide. It carries out the reaction N-(5-phospho-beta-D-ribosyl)anthranilate = 1-(2-carboxyphenylamino)-1-deoxy-D-ribulose 5-phosphate. Its pathway is amino-acid biosynthesis; L-histidine biosynthesis; L-histidine from 5-phospho-alpha-D-ribose 1-diphosphate: step 4/9. The protein operates within amino-acid biosynthesis; L-tryptophan biosynthesis; L-tryptophan from chorismate: step 3/5. Its function is as follows. Involved in both the histidine and tryptophan biosynthetic pathways. The sequence is that of Phosphoribosyl isomerase A from Mycobacterium ulcerans (strain Agy99).